We begin with the raw amino-acid sequence, 344 residues long: Outer membrane protein B (344 aa).

The N-terminal stretch at 1 to 30 (MNSKMLKHLRLATLSFSMFFGIVSSPAVYA) is a signal peptide.

It belongs to the chlamydial OMP family.

The protein resides in the cell outer membrane. The sequence is that of Outer membrane protein B (ompB) from Chlamydia pneumoniae (Chlamydophila pneumoniae).